Consider the following 351-residue polypeptide: Phosphate acetyltransferase (351 aa).

It belongs to the phosphate acetyltransferase and butyryltransferase family.

The protein resides in the cytoplasm. It catalyses the reaction acetyl-CoA + phosphate = acetyl phosphate + CoA. It functions in the pathway metabolic intermediate biosynthesis; acetyl-CoA biosynthesis; acetyl-CoA from acetate: step 2/2. The protein is Phosphate acetyltransferase (pta) of Rickettsia prowazekii (strain Madrid E).